A 322-amino-acid polypeptide reads, in one-letter code: Mas-related G-protein coupled receptor member B5 (322 aa).

Residues M1–N34 are Extracellular-facing. N-linked (GlcNAc...) asparagine glycosylation is found at N11, N16, and N19. A helical transmembrane segment spans residues F35 to L55. The Cytoplasmic segment spans residues A56–N70. A helical membrane pass occupies residues L71 to L91. Residues Q92–T98 lie on the Extracellular side of the membrane. Residues F99–I119 traverse the membrane as a helical segment. The Cytoplasmic segment spans residues S120–A147. The helical transmembrane segment at L148–F168 threads the bilayer. Topologically, residues S169–K172 are extracellular. A helical membrane pass occupies residues Y173 to V193. At P194–R216 the chain is on the cytoplasmic side. A helical membrane pass occupies residues F217–I237. Topologically, residues Y238–T260 are extracellular. The helical transmembrane segment at I261 to I281 threads the bilayer. The Cytoplasmic segment spans residues R282–V322. The segment at T302–V322 is disordered.

Belongs to the G-protein coupled receptor 1 family. Mas subfamily.

Its subcellular location is the membrane. Its function is as follows. Orphan receptor. Probably involved in the function of nociceptive neurons. May regulate nociceptor function and/or development, including the sensation or modulation of pain. The chain is Mas-related G-protein coupled receptor member B5 (Mrgprb5) from Mus musculus (Mouse).